Reading from the N-terminus, the 384-residue chain is Calreticulin-3 (384 aa).

The N-terminal stretch at 1–19 (MAAARVPLWAICVRRVALA) is a signal peptide. Residues 20-197 (TVYFQEEFLD…GQSIESGSIE (178 aa)) are N-domain. The N-linked (GlcNAc...) asparagine glycan is linked to Asn-42. A disulfide bond links Cys-105 and Cys-137. Positions 109, 111, 128, and 135 each coordinate an alpha-D-glucoside. 7 tandem repeats follow at residues 191–202 (IESGSIEYDWQL), 209–220 (EKASAEAEGWDQ), 222–231 (AKDKSQDWEK), 235–246 (DASASKPSDWKG), 250–260 (GDWQAAMLQKP), 264–272 (DGLKPEGID), and 274–284 (DVWLHQKMKNS). Positions 191–246 (IESGSIEYDWQLTSLKKMEKASAEAEGWDQAAKDKSQDWEKHFLDASASKPSDWKG) are 4 X approximate repeats. Positions 198-294 (YDWQLTSLKK…YLTEYDLSEF (97 aa)) are P-domain. A 3 X approximate repeats region spans residues 250–284 (GDWQAAMLQKPPYQDGLKPEGIDKDVWLHQKMKNS). A C-domain region spans residues 295–384 (ENIGAVGLEL…FKGFHRRNEF (90 aa)). Glu-303 is a binding site for an alpha-D-glucoside. The Prevents secretion from ER motif lies at 381–384 (RNEF).

This sequence belongs to the calreticulin family. As to quaternary structure, component of an EIF2 complex at least composed of CELF1/CUGBP1, CALR, CALR3, EIF2S1, EIF2S2, HSP90B1 and HSPA5.

The protein resides in the endoplasmic reticulum lumen. In terms of biological role, during spermatogenesis, may act as a lectin-independent chaperone for specific client proteins such as ADAM3. CALR3 capacity for calcium-binding may be absent or much lower than that of CALR. Required for sperm fertility. The protein is Calreticulin-3 (CALR3) of Bos taurus (Bovine).